The primary structure comprises 557 residues: 2-succinyl-5-enolpyruvyl-6-hydroxy-3-cyclohexene-1-carboxylate synthase (557 aa).

Belongs to the TPP enzyme family. MenD subfamily. Homodimer. It depends on Mg(2+) as a cofactor. Mn(2+) is required as a cofactor. The cofactor is thiamine diphosphate.

The enzyme catalyses isochorismate + 2-oxoglutarate + H(+) = 5-enolpyruvoyl-6-hydroxy-2-succinyl-cyclohex-3-ene-1-carboxylate + CO2. It participates in quinol/quinone metabolism; 1,4-dihydroxy-2-naphthoate biosynthesis; 1,4-dihydroxy-2-naphthoate from chorismate: step 2/7. The protein operates within quinol/quinone metabolism; menaquinone biosynthesis. Its function is as follows. Catalyzes the thiamine diphosphate-dependent decarboxylation of 2-oxoglutarate and the subsequent addition of the resulting succinic semialdehyde-thiamine pyrophosphate anion to isochorismate to yield 2-succinyl-5-enolpyruvyl-6-hydroxy-3-cyclohexene-1-carboxylate (SEPHCHC). The polypeptide is 2-succinyl-5-enolpyruvyl-6-hydroxy-3-cyclohexene-1-carboxylate synthase (Staphylococcus aureus (strain MRSA252)).